A 234-amino-acid chain; its full sequence is Peptidyl-prolyl cis-trans isomerase FKBP17-3, chloroplastic (234 aa).

The transit peptide at 1–28 (MATLFTATVPSHHRFVSPSQHPKQSLLS) directs the protein to the chloroplast. Residues 130-228 (GYLVVFDVKG…DYIIEVDTVY (99 aa)) enclose the PPIase FKBP-type domain.

This sequence belongs to the FKBP-type PPIase family.

It localises to the plastid. The protein localises to the chloroplast thylakoid lumen. It catalyses the reaction [protein]-peptidylproline (omega=180) = [protein]-peptidylproline (omega=0). Its function is as follows. PPIases accelerate the folding of proteins. It catalyzes the cis-trans isomerization of proline imidic peptide bonds in oligopeptides. The polypeptide is Peptidyl-prolyl cis-trans isomerase FKBP17-3, chloroplastic (FKBP17-3) (Arabidopsis thaliana (Mouse-ear cress)).